The primary structure comprises 208 residues: Guanylate kinase (208 aa).

A Guanylate kinase-like domain is found at 4 to 181; it reads GLLIVISGPS…AVEKIQSIIS (178 aa). Position 11-18 (11-18) interacts with ATP; that stretch reads GPSGTGKG.

This sequence belongs to the guanylate kinase family.

It is found in the cytoplasm. It carries out the reaction GMP + ATP = GDP + ADP. Its function is as follows. Essential for recycling GMP and indirectly, cGMP. This chain is Guanylate kinase, found in Clostridium tetani (strain Massachusetts / E88).